The chain runs to 129 residues: Azurin-2 (129 aa).

A Plastocyanin-like domain is found at 1 to 129; sequence AQCEATVESN…MMKGTLKLGS (129 aa). Cys-3 and Cys-26 are oxidised to a cystine. Residues His-46, Cys-112, His-117, and Met-121 each contribute to the Cu cation site.

It localises to the periplasm. Its function is as follows. Transfers electrons from cytochrome c551 to cytochrome oxidase. The protein is Azurin-2 of Alcaligenes xylosoxydans xylosoxydans (Achromobacter xylosoxidans).